The chain runs to 243 residues: ATP synthase subunit a (243 aa).

The next 7 membrane-spanning stretches (helical) occupy residues 29 to 49 (NASLFMVLSTISVALFCYIGL), 54 to 74 (IIPNGIQSIVEFIYEFIVSTI), 89 to 109 (VFTIFMFIATCNLLGILPLGF), 114 to 134 (HIAVTFAISMVVFVSVTIIGF), 144 to 164 (ILLPQGTPGWLAPMMVFIELF), 182 to 202 (IAGHTIIKVIAGFVVKMNIFL), and 208 to 228 (IFIIILIGFEIFVAILQAYIF).

This sequence belongs to the ATPase A chain family. In terms of assembly, F-type ATPases have 2 components, CF(1) - the catalytic core - and CF(0) - the membrane proton channel. CF(1) has five subunits: alpha(3), beta(3), gamma(1), delta(1), epsilon(1). CF(0) has three main subunits: a(1), b(2) and c(9-12). The alpha and beta chains form an alternating ring which encloses part of the gamma chain. CF(1) is attached to CF(0) by a central stalk formed by the gamma and epsilon chains, while a peripheral stalk is formed by the delta and b chains.

The protein localises to the cell inner membrane. Its function is as follows. Key component of the proton channel; it plays a direct role in the translocation of protons across the membrane. The chain is ATP synthase subunit a from Ehrlichia canis (strain Jake).